The chain runs to 447 residues: Serine/threonine-protein phosphatase 2A 55 kDa regulatory subunit B delta isoform (447 aa).

7 WD repeats span residues 26-65 (AEADIISTVEFNCSGELLATGDKGGRVVIFQREQENKSRP), 91-132 (EIEE…KRVE), 175-213 (AHTYHINSISVNSDHQTYLSADDLRVNLWHLEITDRSFN), 224-264 (ELTE…LCDR), 283-321 (EIISSISDVKFSHSGRYMMTRDYLSVKVWDLNMESRPVE), 338-379 (ENDC…DITL), and 414-447 (DFNKKILHTAWHPTDNIIAVAATNNLYIFQDKVN).

The protein belongs to the phosphatase 2A regulatory subunit B family. As to quaternary structure, PP2A consists of a common heterodimeric core enzyme, composed of a 36 kDa catalytic subunit (subunit C) and a 65 kDa constant regulatory subunit (PR65 or subunit A), that associates with a variety of regulatory subunits. Proteins that associate with the core dimer include three families of regulatory subunits B (the R2/B/PR55/B55, R3/B''/PR72/PR130/PR59 and R5/B'/B56 families), the 48 kDa variable regulatory subunit, viral proteins, and cell signaling molecules. Interacts with ensa (when phosphorylated at 'Ser-67') and arpp19 (when phosphorylated at 'Ser-67'), leading to inhibit PP2A activity.

The protein resides in the cytoplasm. Functionally, substrate-recognition subunit of protein phosphatase 2A (PP2A) that plays a key role in cell cycle by controlling mitosis entry and exit. The activity of PP2A complexes containing ppp2r2d (PR55-delta) fluctuate during the cell cycle: the activity is high in interphase and low in mitosis. During mitosis, activity of PP2A is inhibited via interaction with phosphorylated ensa and arpp19 inhibitors. PP2A complexes containing ppp2r2d (PR55-delta) also regulate the activity of TGF-beta/Activin/Nodal signaling by restricting receptor activity. Within the PP2A complexes, the B regulatory subunits modulate substrate selectivity and catalytic activity, and may also direct the localization of the catalytic enzyme to a particular subcellular compartment. The protein is Serine/threonine-protein phosphatase 2A 55 kDa regulatory subunit B delta isoform (ppp2r2d) of Xenopus laevis (African clawed frog).